The sequence spans 301 residues: Small ribosomal subunit biogenesis GTPase RsgA (301 aa).

One can recognise a CP-type G domain in the interval isoleucine 63–tyrosine 224. Residues serine 112 to aspartate 115 and glycine 167 to threonine 175 each bind GTP. Zn(2+) contacts are provided by cysteine 248, cysteine 253, histidine 255, and cysteine 261.

This sequence belongs to the TRAFAC class YlqF/YawG GTPase family. RsgA subfamily. Monomer. Associates with 30S ribosomal subunit, binds 16S rRNA. Requires Zn(2+) as cofactor.

It is found in the cytoplasm. One of several proteins that assist in the late maturation steps of the functional core of the 30S ribosomal subunit. Helps release RbfA from mature subunits. May play a role in the assembly of ribosomal proteins into the subunit. Circularly permuted GTPase that catalyzes slow GTP hydrolysis, GTPase activity is stimulated by the 30S ribosomal subunit. This Leuconostoc citreum (strain KM20) protein is Small ribosomal subunit biogenesis GTPase RsgA.